The primary structure comprises 97 residues: Coiled-coil domain-containing protein 167 (97 aa).

The stretch at 10–79 (GVALEIDGLE…LRQENRKNML (70 aa)) forms a coiled coil. The helical transmembrane segment at 78 to 95 (MLLSVAIFILLTLVYAYW) threads the bilayer.

The protein resides in the membrane. This Homo sapiens (Human) protein is Coiled-coil domain-containing protein 167 (CCDC167).